The following is a 463-amino-acid chain: Glutamate--tRNA ligase (463 aa).

The 'HIGH' region motif lies at 10–20; the sequence is PSPTGYLHIGG. Residues 252-256 carry the 'KMSKS' region motif; it reads KLSKR. Lys255 contacts ATP.

This sequence belongs to the class-I aminoacyl-tRNA synthetase family. Glutamate--tRNA ligase type 1 subfamily. Monomer.

It localises to the cytoplasm. The enzyme catalyses tRNA(Glu) + L-glutamate + ATP = L-glutamyl-tRNA(Glu) + AMP + diphosphate. In terms of biological role, catalyzes the attachment of glutamate to tRNA(Glu) in a two-step reaction: glutamate is first activated by ATP to form Glu-AMP and then transferred to the acceptor end of tRNA(Glu). This chain is Glutamate--tRNA ligase, found in Mycoplasmopsis agalactiae (strain NCTC 10123 / CIP 59.7 / PG2) (Mycoplasma agalactiae).